The primary structure comprises 90 residues: MSRTVFCEHFQKEAEGLDFQLYPGELGERIFNHISKDAWAEWQKKQTMLINEKRLNMMDPTDREFLEKQMTAFLFEGKAPEIEGYTPPES.

The protein belongs to the Fe(2+)-trafficking protein family.

Its function is as follows. Could be a mediator in iron transactions between iron acquisition and iron-requiring processes, such as synthesis and/or repair of Fe-S clusters in biosynthetic enzymes. The sequence is that of Probable Fe(2+)-trafficking protein from Idiomarina loihiensis (strain ATCC BAA-735 / DSM 15497 / L2-TR).